Reading from the N-terminus, the 315-residue chain is uncharacterized protein (315 aa).

Coiled coils occupy residues Ala184–Gln212 and Glu238–Lys275.

The protein belongs to the IIV-6 287R family.

This is an uncharacterized protein from Acheta domesticus (House cricket).